Here is a 419-residue protein sequence, read N- to C-terminus: Effector protein BipC (419 aa).

2 disordered regions span residues 62–94 (VAGS…GLER) and 338–402 (LQSG…AKSQ). Composition is skewed to basic and acidic residues over residues 71 to 94 (ELAR…GLER) and 380 to 392 (TRDE…REAA).

It belongs to the SctB/SipC family.

The protein localises to the secreted. In Burkholderia pseudomallei (strain 1710b), this protein is Effector protein BipC (bipC).